Here is a 190-residue protein sequence, read N- to C-terminus: Potassium-transporting ATPase KdpC subunit (190 aa).

A helical transmembrane segment spans residues 13-33; it reads VGFLLLTLMCGVVYPGIVTIF.

Belongs to the KdpC family. The system is composed of three essential subunits: KdpA, KdpB and KdpC.

The protein resides in the cell membrane. Its function is as follows. Part of the high-affinity ATP-driven potassium transport (or Kdp) system, which catalyzes the hydrolysis of ATP coupled with the electrogenic transport of potassium into the cytoplasm. This subunit acts as a catalytic chaperone that increases the ATP-binding affinity of the ATP-hydrolyzing subunit KdpB by the formation of a transient KdpB/KdpC/ATP ternary complex. The sequence is that of Potassium-transporting ATPase KdpC subunit from Listeria monocytogenes serotype 4a (strain HCC23).